The sequence spans 227 residues: Ribonuclease 3 (227 aa).

Residues 6-128 (ASDYQQRIGY…VIAAIYLDAD (123 aa)) form the RNase III domain. Glutamate 41 lines the Mg(2+) pocket. Aspartate 45 is a catalytic residue. 2 residues coordinate Mg(2+): aspartate 114 and glutamate 117. Glutamate 117 is a catalytic residue. In terms of domain architecture, DRBM spans 155–225 (DPKTRLQEWL…ASHAIDQLDS (71 aa)). Residues 203–212 (GEGSSRRLAE) show a composition bias toward basic and acidic residues. Positions 203-227 (GEGSSRRLAEQDAASHAIDQLDSNK) are disordered.

Belongs to the ribonuclease III family. As to quaternary structure, homodimer. Mg(2+) is required as a cofactor.

Its subcellular location is the cytoplasm. It catalyses the reaction Endonucleolytic cleavage to 5'-phosphomonoester.. Its function is as follows. Digests double-stranded RNA. Involved in the processing of primary rRNA transcript to yield the immediate precursors to the large and small rRNAs (23S and 16S). Processes some mRNAs, and tRNAs when they are encoded in the rRNA operon. Processes pre-crRNA and tracrRNA of type II CRISPR loci if present in the organism. This chain is Ribonuclease 3, found in Xylella fastidiosa (strain M23).